The following is a 722-amino-acid chain: Bifunctional UDP-N-acetylglucosamine 2-epimerase/N-acetylmannosamine kinase (722 aa).

R19, S23, R113, H220, and N253 together coordinate UDP. CMP-N-acetyl-beta-neuraminate is bound by residues K259, E271, K280, and H281. 5 residues coordinate UDP: V282, S301, S302, E307, and R321. Residues 406-722 (TLSALAVDLG…VLDYTTRRIY (317 aa)) are N-acetylmannosamine kinase. Position 413 (D413) interacts with Mg(2+). G416 serves as a coordination point for an N-acyl-D-mannosamine 6-phosphate. ADP is bound by residues T417, N418, and R420. Positions 476, 477, 489, 516, 517, and 545 each coordinate an N-acyl-D-mannosamine 6-phosphate. An N-acyl-D-mannosamine is bound by residues G476, R477, T489, N516, and D517. D517 is an active-site residue. The an N-acyl-D-mannosamine site is built by E566 and H569. Position 569 (H569) interacts with an N-acyl-D-mannosamine 6-phosphate. H569, C579, C581, and C586 together coordinate Zn(2+). E588 is an an N-acyl-D-mannosamine 6-phosphate binding site. An N-acyl-D-mannosamine is bound at residue E588.

This sequence in the N-terminal section; belongs to the UDP-N-acetylglucosamine 2-epimerase family. In the C-terminal section; belongs to the ROK (NagC/XylR) family. Homodimer. Homotetramer. Homohexamer. The hexameric form exhibits both enzyme activities, whereas the dimeric form only catalyzes the phosphorylation of N-acyl-D-mannosamine. Phosphorylated. Phosphorylation by PKC activates the UDP-N-acetylglucosamine 2-epimerase activity. Highest expression in liver and placenta. Also found in heart, brain, lung, kidney, skeletal muscle and pancreas. Isoform 1 is expressed in heart, brain, kidney, liver, placenta, lung, spleen, pancreas, skeletal muscle and colon. Isoform 2 is expressed mainly in placenta, but also in brain, kidney, liver, lung, pancreas and colon. Isoform 3 is expressed at low level in kidney, liver, placenta and colon.

The protein resides in the cytoplasm. The protein localises to the cytosol. It catalyses the reaction UDP-N-acetyl-alpha-D-glucosamine + H2O = aldehydo-N-acetyl-D-mannosamine + UDP + H(+). The catalysed reaction is an N-acyl-D-mannosamine + ATP = an N-acyl-D-mannosamine 6-phosphate + ADP + H(+). The protein operates within amino-sugar metabolism; N-acetylneuraminate biosynthesis. The UDP-N-acetylglucosamine 2-epimerase activity, in contrast to the N-acetylmannosamine kinase activity, exhibits allosteric regulation by cytidine monophosphate-N-acetylneuraminic acid (CMP-Neu5Ac), the end product of neuraminic acid biosynthesis. Moreover, the activity is contingent upon the oligomeric state of the enzyme. The monomeric form is inactive, while the dimeric form selectively catalyzes the phosphorylation of N-acetylmannosamine. The hexameric form, on the other hand, demonstrates full proficiency in both enzyme activities. Furthermore, the UDP-N-acetylglucosamine 2-epimerase activity is increased by PKC-mediated phosphorylation. Its function is as follows. Bifunctional enzyme that possesses both UDP-N-acetylglucosamine 2-epimerase and N-acetylmannosamine kinase activities, and serves as the initiator of the biosynthetic pathway leading to the production of N-acetylneuraminic acid (NeuAc), a critical precursor in the synthesis of sialic acids. By catalyzing this pivotal and rate-limiting step in sialic acid biosynthesis, this enzyme assumes a pivotal role in governing the regulation of cell surface sialylation, playing a role in embryonic angiogenesis. Sialic acids represent a category of negatively charged sugars that reside on the surface of cells as terminal components of glycoconjugates and mediate important functions in various cellular processes, including cell adhesion, signal transduction, and cellular recognition. This is Bifunctional UDP-N-acetylglucosamine 2-epimerase/N-acetylmannosamine kinase from Homo sapiens (Human).